Reading from the N-terminus, the 643-residue chain is Phosphomethylpyrimidine synthase (643 aa).

Residues asparagine 248, methionine 277, tyrosine 306, histidine 342, 362–364, 403–406, and glutamate 442 contribute to the substrate site; these read SRG and DGLR. Position 446 (histidine 446) interacts with Zn(2+). Residue tyrosine 469 coordinates substrate. Residue histidine 510 participates in Zn(2+) binding. [4Fe-4S] cluster is bound by residues cysteine 590, cysteine 593, and cysteine 598.

This sequence belongs to the ThiC family. As to quaternary structure, homodimer. [4Fe-4S] cluster serves as cofactor.

It carries out the reaction 5-amino-1-(5-phospho-beta-D-ribosyl)imidazole + S-adenosyl-L-methionine = 4-amino-2-methyl-5-(phosphooxymethyl)pyrimidine + CO + 5'-deoxyadenosine + formate + L-methionine + 3 H(+). It participates in cofactor biosynthesis; thiamine diphosphate biosynthesis. Functionally, catalyzes the synthesis of the hydroxymethylpyrimidine phosphate (HMP-P) moiety of thiamine from aminoimidazole ribotide (AIR) in a radical S-adenosyl-L-methionine (SAM)-dependent reaction. This is Phosphomethylpyrimidine synthase from Burkholderia pseudomallei (strain 1106a).